Consider the following 187-residue polypeptide: CRISPR system Cmr subunit Cmr1-2 (187 aa).

The protein belongs to the CRISPR system Cmr1 family. Part of the type III-B Cmr ribonucleoprotein (RNP) complex. This is an elongated RNP with Cmr2 and Cmr3 as the base, with Cmr4 and Cmr5 forming a helical core along the mature crRNA (39 or 45 nt in length), while the complex is capped by Cmr6 and Cmr1. The 5' end of the crRNA is bound to Cmr2 and Cmr3, while Cmr6 and a Cmr1 subunit (Cmr1-1 or Cmr1-2) cap the 3' end of the crRNA. The target RNA lies antiparallel to the crRNA, with its 5' end near Cmr1 and Cmr6 and its 3' end near Cmr2 and Cmr3; major target cleavage occurs nears the junction of Cmr1/Cmr6 and Cmr4/Cmr, with minor cleavage occurring at 6 nt intervals which coincide with the proposed spacing of Cmr4 subunits.

It localises to the cytoplasm. CRISPR (clustered regularly interspaced short palindromic repeat), is an adaptive immune system that provides protection against mobile genetic elements (viruses, transposable elements and conjugative plasmids). CRISPR clusters contain sequences complementary to antecedent mobile elements and target invading nucleic acids. CRISPR clusters are transcribed and processed into CRISPR RNA (crRNA), formerly called psiRNA (prokaryotic silencing) in this organism. Part of the Cmr ribonucleoprotein complex which has divalent cation-dependent endoribonuclease activity specific for ssRNA complementary to the crRNA (target RNA), generating 5' hydroxy- and 3' phosphate or 2'-3' cyclic phosphate termini. Cmr4 is probably the subunit that cleaves target RNA. Cmr complex does not cleave ssDNA complementary to the crRNA. Cleavage of invading RNA is guided by the crRNA; substrate cleavage occurs a fixed distance (14 nt) from the 3' end of the crRNA. In vitro reconstitution shows Cmr1-2 and Cmr5 are not absolutely necessary for target cleavage. The protein is CRISPR system Cmr subunit Cmr1-2 of Pyrococcus furiosus (strain ATCC 43587 / DSM 3638 / JCM 8422 / Vc1).